The chain runs to 258 residues: Tryptophan synthase alpha chain (258 aa).

Residues Glu47 and Asp58 each act as proton acceptor in the active site.

This sequence belongs to the TrpA family. As to quaternary structure, tetramer of two alpha and two beta chains.

It carries out the reaction (1S,2R)-1-C-(indol-3-yl)glycerol 3-phosphate + L-serine = D-glyceraldehyde 3-phosphate + L-tryptophan + H2O. It functions in the pathway amino-acid biosynthesis; L-tryptophan biosynthesis; L-tryptophan from chorismate: step 5/5. Functionally, the alpha subunit is responsible for the aldol cleavage of indoleglycerol phosphate to indole and glyceraldehyde 3-phosphate. In Bacillus cereus (strain G9842), this protein is Tryptophan synthase alpha chain.